The primary structure comprises 97 residues: uncharacterized protein (97 aa).

Transmembrane regions (helical) follow at residues 5–25 (INYLLIVIALLFFVVAYFVGI), 49–71 (IAGYFFLNSGLFILLNSFISFQG), and 75–92 (LIPPLILAYGAGVIIYVN).

Its subcellular location is the cell membrane. This is an uncharacterized protein from Bacillus subtilis (strain 168).